We begin with the raw amino-acid sequence, 185 residues long: MSKFSLKLGSKTLKKNISKKTKKKNSLQKANLFDWDDAETASLSHKPQSKIKIQSIDKFDLDEESSSKKKLVIKLSENADTKKNDAPLVEYVTEKEYNEVPVEEFGDALLRGMGWESDSEQDSKGDKTQSRNKDVSNVSQIHPDGLGIGAKLNKAINVEEASFMPVVKIDKITGTKVDDDKKNKS.

The 50-residue stretch at 100–149 (VPVEEFGDALLRGMGWESDSEQDSKGDKTQSRNKDVSNVSQIHPDGLGIG) folds into the G-patch domain. The tract at residues 112-143 (GMGWESDSEQDSKGDKTQSRNKDVSNVSQIHP) is disordered. Positions 121-134 (QDSKGDKTQSRNKD) are enriched in basic and acidic residues.

The protein belongs to the SPP2 family. In terms of assembly, belongs to the CWC complex (or CEF1-associated complex), a spliceosome sub-complex reminiscent of a late-stage spliceosome composed of the U2, U5 and U6 snRNAs and at least BUD13, BUD31, BRR2, CDC40, CEF1, CLF1, CUS1, CWC2, CWC15, CWC21, CWC22, CWC23, CWC24, CWC25, CWC27, ECM2, HSH155, IST3, ISY1, LEA1, MSL1, NTC20, PRP8, PRP9, PRP11, PRP19, PRP21, PRP22, PRP45, PRP46, SLU7, SMB1, SMD1, SMD2, SMD3, SMX2, SMX3, SNT309, SNU114, SPP2, SYF1, SYF2, RSE1 and YJU2. Interacts with PRP2.

It is found in the cytoplasm. The protein localises to the nucleus. Involved in pre-mRNA splicing; specifically in the final stages of spliceosome maturation. Promotes the first step of splicing. The protein is Pre-mRNA-splicing factor SPP2 (SPP2) of Saccharomyces cerevisiae (strain ATCC 204508 / S288c) (Baker's yeast).